The chain runs to 885 residues: Isoleucine--tRNA ligase (885 aa).

The short motif at 59–69 (PYANGDLHIGH) is the 'HIGH' region element. Position 550 (Glu-550) interacts with L-isoleucyl-5'-AMP. The short motif at 591-595 (KMSKS) is the 'KMSKS' region element. Residue Lys-594 coordinates ATP. Cys-861, Cys-864, Cys-877, and Cys-880 together coordinate Zn(2+).

The protein belongs to the class-I aminoacyl-tRNA synthetase family. IleS type 1 subfamily. Monomer. Zn(2+) is required as a cofactor.

The protein resides in the cytoplasm. It catalyses the reaction tRNA(Ile) + L-isoleucine + ATP = L-isoleucyl-tRNA(Ile) + AMP + diphosphate. Catalyzes the attachment of isoleucine to tRNA(Ile). As IleRS can inadvertently accommodate and process structurally similar amino acids such as valine, to avoid such errors it has two additional distinct tRNA(Ile)-dependent editing activities. One activity is designated as 'pretransfer' editing and involves the hydrolysis of activated Val-AMP. The other activity is designated 'posttransfer' editing and involves deacylation of mischarged Val-tRNA(Ile). The polypeptide is Isoleucine--tRNA ligase (Mycoplasma mobile (strain ATCC 43663 / 163K / NCTC 11711) (Mesomycoplasma mobile)).